We begin with the raw amino-acid sequence, 224 residues long: Redox-sensing transcriptional repressor Rex (224 aa).

The segment at residues 17 to 56 (RYHRYLEELLKNDVKRISSRELSEKMGVTASQIRQDLNNF) is a DNA-binding region (H-T-H motif). 91-96 (GAGNLG) serves as a coordination point for NAD(+).

Belongs to the transcriptional regulatory Rex family. In terms of assembly, homodimer.

Its subcellular location is the cytoplasm. Modulates transcription in response to changes in cellular NADH/NAD(+) redox state. The polypeptide is Redox-sensing transcriptional repressor Rex (Thermoanaerobacter sp. (strain X514)).